The primary structure comprises 303 residues: Sodium/potassium-transporting ATPase subunit beta-1 (303 aa).

At 1 to 34 (MPAATKDSDGGWKKFLWNSEKKEFLGRTGGSWAK) the chain is on the cytoplasmic side. A helical; Signal-anchor for type II membrane protein transmembrane segment spans residues 35–55 (ILLFYVIFYGCLAGIFIGTIQ). Residues 56–303 (ALLLTINDFK…FDVKFTINES (248 aa)) are Extracellular-facing. Asn-113 carries N-linked (GlcNAc...) asparagine glycosylation. Intrachain disulfides connect Cys-126–Cys-149 and Cys-159–Cys-175. N-linked (GlcNAc...) asparagine glycosylation is found at Asn-194 and Asn-264. A disulfide bridge links Cys-214 with Cys-275.

It belongs to the X(+)/potassium ATPases subunit beta family. In terms of assembly, the sodium/potassium-transporting ATPase is composed of a catalytic alpha subunit, an auxiliary non-catalytic beta subunit and an additional regulatory subunit. Detected in all tissues except liver and cardiac muscle. Highest levels found in intestine, ovary and kidney with marginally lower levels in brain, spleen, esophagus, eye and pancreas, intermediate levels in gill and low levels in white and red skeletal muscle.

The protein localises to the cell membrane. This is the non-catalytic component of the active enzyme, which catalyzes the hydrolysis of ATP coupled with the exchange of Na(+) and K(+) ions across the plasma membrane. The beta subunit regulates, through assembly of alpha/beta heterodimers, the number of sodium pumps transported to the plasma membrane. This is Sodium/potassium-transporting ATPase subunit beta-1 (atp1b1) from Anguilla anguilla (European freshwater eel).